The sequence spans 151 residues: Transcriptional repressor NrdR (151 aa).

A zinc finger lies at 3–34 (CPFCGYSESKVVDSRSTEDNMAIRRRRECLEC). In terms of domain architecture, ATP-cone spans 49–139 (ILVIKKDSSR…VYRQFKDINT (91 aa)).

The protein belongs to the NrdR family. Zn(2+) is required as a cofactor.

Functionally, negatively regulates transcription of bacterial ribonucleotide reductase nrd genes and operons by binding to NrdR-boxes. In Clostridium acetobutylicum (strain ATCC 824 / DSM 792 / JCM 1419 / IAM 19013 / LMG 5710 / NBRC 13948 / NRRL B-527 / VKM B-1787 / 2291 / W), this protein is Transcriptional repressor NrdR.